A 284-amino-acid polypeptide reads, in one-letter code: tRNA N(3)-cytidine methyltransferase METTL6 (284 aa).

Residues Trp45 and Tyr49 each coordinate S-adenosyl-L-methionine. S-adenosyl-L-homocysteine is bound by residues Tyr49, His61, Glu85, Gly87, Asp110, Asp136, Leu137, and Ile157. Gly87, Asp110, Asp136, Leu137, and Ile157 together coordinate S-adenosyl-L-methionine.

This sequence belongs to the methyltransferase superfamily. METL family. As to quaternary structure, monomer. Interacts with SARS1/SerRS; interaction is mediated via tRNA(Ser) and is required for N(3)-methylcytidine methylation.

It localises to the cytoplasm. The protein localises to the nucleus. It catalyses the reaction cytidine(32) in tRNA(Ser) + S-adenosyl-L-methionine = N(3)-methylcytidine(32) in tRNA(Ser) + S-adenosyl-L-homocysteine + H(+). S-adenosyl-L-methionine-dependent methyltransferase that mediates N(3)-methylcytidine modification of residue 32 of the tRNA anticodon loop of tRNA(Ser), including tRNA(Ser)(UGA) and tRNA(Ser)(GCU). Interaction with SARS1/SerRS is required for N(3)-methylcytidine methylation. In Homo sapiens (Human), this protein is tRNA N(3)-cytidine methyltransferase METTL6.